The chain runs to 143 residues: FAD synthase (143 aa).

ATP is bound by residues 11-12, 16-19, and aspartate 94; these read TF and HPGH.

It belongs to the archaeal FAD synthase family. Homodimer. Requires a divalent metal cation as cofactor.

It catalyses the reaction FMN + ATP + H(+) = FAD + diphosphate. It participates in cofactor biosynthesis; FAD biosynthesis; FAD from FMN: step 1/1. Catalyzes the transfer of the AMP portion of ATP to flavin mononucleotide (FMN) to produce flavin adenine dinucleotide (FAD) coenzyme. The sequence is that of FAD synthase from Halomicrobium mukohataei (strain ATCC 700874 / DSM 12286 / JCM 9738 / NCIMB 13541) (Haloarcula mukohataei).